Reading from the N-terminus, the 139-residue chain is Large-conductance mechanosensitive channel 1 (139 aa).

3 consecutive transmembrane segments (helical) span residues 8 to 28, 30 to 50, and 81 to 101; these read FISK…AAFG, IVDS…FGGL, and GSFI…FLMV.

The protein belongs to the MscL family. Homopentamer.

The protein resides in the cell inner membrane. Channel that opens in response to stretch forces in the membrane lipid bilayer. May participate in the regulation of osmotic pressure changes within the cell. The protein is Large-conductance mechanosensitive channel 1 of Mesorhizobium japonicum (strain LMG 29417 / CECT 9101 / MAFF 303099) (Mesorhizobium loti (strain MAFF 303099)).